A 572-amino-acid chain; its full sequence is Proline--tRNA ligase (572 aa).

It belongs to the class-II aminoacyl-tRNA synthetase family. ProS type 1 subfamily. In terms of assembly, homodimer.

The protein resides in the cytoplasm. The catalysed reaction is tRNA(Pro) + L-proline + ATP = L-prolyl-tRNA(Pro) + AMP + diphosphate. Catalyzes the attachment of proline to tRNA(Pro) in a two-step reaction: proline is first activated by ATP to form Pro-AMP and then transferred to the acceptor end of tRNA(Pro). As ProRS can inadvertently accommodate and process non-cognate amino acids such as alanine and cysteine, to avoid such errors it has two additional distinct editing activities against alanine. One activity is designated as 'pretransfer' editing and involves the tRNA(Pro)-independent hydrolysis of activated Ala-AMP. The other activity is designated 'posttransfer' editing and involves deacylation of mischarged Ala-tRNA(Pro). The misacylated Cys-tRNA(Pro) is not edited by ProRS. The protein is Proline--tRNA ligase of Psychrobacter cryohalolentis (strain ATCC BAA-1226 / DSM 17306 / VKM B-2378 / K5).